The following is a 68-amino-acid chain: Gallinacin-10 (68 aa).

A signal peptide spans 1 to 19 (MKILCLLFAVLLFLFQAAP). Residues 20-25 (GSADPL) constitute a propeptide that is removed on maturation. 3 disulfides stabilise this stretch: cysteine 32-cysteine 61, cysteine 39-cysteine 54, and cysteine 44-cysteine 62.

It belongs to the beta-defensin family. Strong expression in the testis, liver, gall bladder and kidney. Also expressed in the ovary and male and female reproductive tracts. Expressed in the ovarian stroma and the theca and granulosa layers of the ovarian follicle.

It localises to the secreted. Its subcellular location is the cytoplasmic granule. Functionally, has bactericidal activity. This chain is Gallinacin-10 (GAL10), found in Gallus gallus (Chicken).